The chain runs to 238 residues: Flagellar L-ring protein (238 aa).

The first 16 residues, 1-16, serve as a signal peptide directing secretion; that stretch reads MRKLILISLCIFFLAS. The N-palmitoyl cysteine moiety is linked to residue Cys17. A lipid anchor (S-diacylglycerol cysteine) is attached at Cys17.

Belongs to the FlgH family. In terms of assembly, the basal body constitutes a major portion of the flagellar organelle and consists of four rings (L,P,S, and M) mounted on a central rod.

It localises to the cell outer membrane. Its subcellular location is the bacterial flagellum basal body. Assembles around the rod to form the L-ring and probably protects the motor/basal body from shearing forces during rotation. The sequence is that of Flagellar L-ring protein from Thermodesulfovibrio yellowstonii (strain ATCC 51303 / DSM 11347 / YP87).